Here is a 490-residue protein sequence, read N- to C-terminus: Aspartyl/glutamyl-tRNA(Asn/Gln) amidotransferase subunit B (490 aa).

Belongs to the GatB/GatE family. GatB subfamily. Heterotrimer of A, B and C subunits.

It carries out the reaction L-glutamyl-tRNA(Gln) + L-glutamine + ATP + H2O = L-glutaminyl-tRNA(Gln) + L-glutamate + ADP + phosphate + H(+). It catalyses the reaction L-aspartyl-tRNA(Asn) + L-glutamine + ATP + H2O = L-asparaginyl-tRNA(Asn) + L-glutamate + ADP + phosphate + 2 H(+). In terms of biological role, allows the formation of correctly charged Asn-tRNA(Asn) or Gln-tRNA(Gln) through the transamidation of misacylated Asp-tRNA(Asn) or Glu-tRNA(Gln) in organisms which lack either or both of asparaginyl-tRNA or glutaminyl-tRNA synthetases. The reaction takes place in the presence of glutamine and ATP through an activated phospho-Asp-tRNA(Asn) or phospho-Glu-tRNA(Gln). In Burkholderia thailandensis (strain ATCC 700388 / DSM 13276 / CCUG 48851 / CIP 106301 / E264), this protein is Aspartyl/glutamyl-tRNA(Asn/Gln) amidotransferase subunit B.